A 943-amino-acid chain; its full sequence is Isoleucine--tRNA ligase (943 aa).

A 'HIGH' region motif is present at residues 58-68; sequence PYANGSIHIGH. L-isoleucyl-5'-AMP is bound at residue E567. Residues 608 to 612 carry the 'KMSKS' region motif; sequence KMSKS. Residue K611 coordinates ATP. C906, C909, C926, and C929 together coordinate Zn(2+).

It belongs to the class-I aminoacyl-tRNA synthetase family. IleS type 1 subfamily. In terms of assembly, monomer. It depends on Zn(2+) as a cofactor.

It localises to the cytoplasm. It catalyses the reaction tRNA(Ile) + L-isoleucine + ATP = L-isoleucyl-tRNA(Ile) + AMP + diphosphate. Its function is as follows. Catalyzes the attachment of isoleucine to tRNA(Ile). As IleRS can inadvertently accommodate and process structurally similar amino acids such as valine, to avoid such errors it has two additional distinct tRNA(Ile)-dependent editing activities. One activity is designated as 'pretransfer' editing and involves the hydrolysis of activated Val-AMP. The other activity is designated 'posttransfer' editing and involves deacylation of mischarged Val-tRNA(Ile). The sequence is that of Isoleucine--tRNA ligase from Pseudomonas paraeruginosa (strain DSM 24068 / PA7) (Pseudomonas aeruginosa (strain PA7)).